A 185-amino-acid chain; its full sequence is Large ribosomal subunit protein uL5 (185 aa).

It belongs to the universal ribosomal protein uL5 family. In terms of assembly, part of the 50S ribosomal subunit; part of the 5S rRNA/L5/L18/L25 subcomplex. Contacts the 5S rRNA and the P site tRNA. Forms a bridge to the 30S subunit in the 70S ribosome.

This is one of the proteins that bind and probably mediate the attachment of the 5S RNA into the large ribosomal subunit, where it forms part of the central protuberance. In the 70S ribosome it contacts protein S13 of the 30S subunit (bridge B1b), connecting the 2 subunits; this bridge is implicated in subunit movement. Contacts the P site tRNA; the 5S rRNA and some of its associated proteins might help stabilize positioning of ribosome-bound tRNAs. This is Large ribosomal subunit protein uL5 from Bacteroides thetaiotaomicron (strain ATCC 29148 / DSM 2079 / JCM 5827 / CCUG 10774 / NCTC 10582 / VPI-5482 / E50).